The following is a 353-amino-acid chain: UDP-xylose transporter 2 (353 aa).

10 helical membrane passes run 7 to 27 (FQLGTIGALSLSVVSSVSIVI), 31 to 51 (ALISTLGFTFATTLTSWHLLV), 75 to 95 (VLGFGVLNGISIGLLNLSLGF), 100 to 120 (FYQMTKLAIIPCTVVLETIFF), 132 to 152 (LVILLLGVGIATVTDLQLNML), 154 to 174 (SVLSLLAVITTCVAQIMTNTI), 194 to 214 (AITLFVTGPFLDGLLTNQNVF), 224 to 244 (FFIVLSCLISVSVNFSTFLVI), 250 to 270 (VTYQVLGHLKTCLVLAFGYLL), and 280 to 300 (ILGILVAVIGMVLYSYYCTLE). Residues 308-353 (TSTQLPQMDENEKDPLVSAENGSGLISDNGVQKQDPVWNSNKDFQA) are disordered. Over residues 327–353 (ENGSGLISDNGVQKQDPVWNSNKDFQA) the composition is skewed to polar residues. S334 is subject to Phosphoserine.

This sequence belongs to the TPT transporter family. TPT (TC 2.A.7.9) subfamily. In terms of tissue distribution, ubiquitous.

It localises to the golgi apparatus membrane. Its function is as follows. Nucleotide-sugar transporter that transports UDP-xylose and UMP in a strict counter-exchange mode. In Arabidopsis thaliana (Mouse-ear cress), this protein is UDP-xylose transporter 2.